The following is a 169-amino-acid chain: Peptide methionine sulfoxide reductase MsrA (169 aa).

Cysteine 10 is a catalytic residue.

Belongs to the MsrA Met sulfoxide reductase family.

It catalyses the reaction L-methionyl-[protein] + [thioredoxin]-disulfide + H2O = L-methionyl-(S)-S-oxide-[protein] + [thioredoxin]-dithiol. The enzyme catalyses [thioredoxin]-disulfide + L-methionine + H2O = L-methionine (S)-S-oxide + [thioredoxin]-dithiol. Functionally, has an important function as a repair enzyme for proteins that have been inactivated by oxidation. Catalyzes the reversible oxidation-reduction of methionine sulfoxide in proteins to methionine. The protein is Peptide methionine sulfoxide reductase MsrA of Streptococcus equi subsp. equi (strain 4047).